The following is a 285-amino-acid chain: Meiotically up-regulated gene 125 protein (285 aa).

The protein localises to the cytoplasm. Its subcellular location is the nucleus. In terms of biological role, has a role in meiosis. This is Meiotically up-regulated gene 125 protein (mug125) from Schizosaccharomyces pombe (strain 972 / ATCC 24843) (Fission yeast).